The following is a 265-amino-acid chain: Very long chain fatty acid elongase 6 (265 aa).

N-linked (GlcNAc...) asparagine glycosylation is present at asparagine 2. A run of 7 helical transmembrane segments spans residues 34 to 51, 70 to 90, 111 to 131, 136 to 156, 159 to 179, 197 to 217, and 232 to 252; these read FLFS…RHLM, LAVF…YILM, FWAY…IFII, KLIF…WYSY, MVAG…VMYS, FITL…YLVF, and IFWS…FFFE.

The protein belongs to the ELO family. ELOVL6 subfamily. N-Glycosylated. Ubiquitous.

It localises to the endoplasmic reticulum membrane. It carries out the reaction a very-long-chain acyl-CoA + malonyl-CoA + H(+) = a very-long-chain 3-oxoacyl-CoA + CO2 + CoA. The enzyme catalyses hexadecanoyl-CoA + malonyl-CoA + H(+) = 3-oxooctadecanoyl-CoA + CO2 + CoA. It catalyses the reaction (9Z)-hexadecenoyl-CoA + malonyl-CoA + H(+) = 3-oxo-(11Z)-octadecenoyl-CoA + CO2 + CoA. The catalysed reaction is dodecanoyl-CoA + malonyl-CoA + H(+) = 3-oxotetradecanoyl-CoA + CO2 + CoA. It carries out the reaction tetradecanoyl-CoA + malonyl-CoA + H(+) = 3-oxohexadecanoyl-CoA + CO2 + CoA. The enzyme catalyses (9Z)-octadecenoyl-CoA + malonyl-CoA + H(+) = 3-oxo-(11Z)-eicosenoyl-CoA + CO2 + CoA. It catalyses the reaction (9Z,12Z)-octadecadienoyl-CoA + malonyl-CoA + H(+) = (11Z,14Z)-3-oxoicosa-11,14-dienoyl-CoA + CO2 + CoA. The catalysed reaction is (9Z,12Z,15Z)-octadecatrienoyl-CoA + malonyl-CoA + H(+) = (11Z,14Z,17Z)-3-oxoeicosatrienoyl-CoA + CO2 + CoA. Its pathway is lipid metabolism; fatty acid biosynthesis. With respect to regulation, the reaction is stimulated by the presence of HSD17B12, the enzyme catalyzing the second step of the elongation cycle. Functionally, catalyzes the first and rate-limiting reaction of the four reactions that constitute the long-chain fatty acids elongation cycle. This endoplasmic reticulum-bound enzymatic process allows the addition of 2 carbons to the chain of long- and very long-chain fatty acids (VLCFAs) per cycle. Condensing enzyme that elongates fatty acids with 12, 14 and 16 carbons with higher activity toward C16:0 acyl-CoAs. Catalyzes the synthesis of unsaturated C16 long chain fatty acids and, to a lesser extent, C18:0 and those with low desaturation degree. May participate in the production of saturated and monounsaturated VLCFAs of different chain lengths that are involved in multiple biological processes as precursors of membrane lipids and lipid mediators. This Homo sapiens (Human) protein is Very long chain fatty acid elongase 6.